Here is a 234-residue protein sequence, read N- to C-terminus: Methylamine utilization ferredoxin-type protein MauM (234 aa).

4 consecutive 4Fe-4S ferredoxin-type domains span residues 61-91, 98-131, 140-176, and 184-215; these read ALAE…LASW, GTPF…PLLT, VAVL…LKPI, and QIPT…VLPR. C71, C74, C77, C81, C109, C112, C117, C121, C149, C157, C160, C164, C193, C196, C199, and C203 together coordinate [4Fe-4S] cluster.

It participates in one-carbon metabolism; methylamine degradation. Involved in electron transfer. This Methylobacillus flagellatus (strain ATCC 51484 / DSM 6875 / VKM B-1610 / KT) protein is Methylamine utilization ferredoxin-type protein MauM (mauM).